The following is a 504-amino-acid chain: Flavin-dependent halogenase armH3 (504 aa).

Positions 16, 19, 49, and 149 each coordinate FAD. Ser329 and Gly330 together coordinate chloride. Residue Ile331 coordinates FAD. The segment at 444–475 (NNLRTPVDTGAADVKAKHAPSETDAQNPLQSM) is disordered.

Belongs to the flavin-dependent halogenase family.

It carries out the reaction melleolide F + FADH2 + chloride + O2 = 6'-chloromelleolide F + FAD + 2 H2O + H(+). Its function is as follows. Flavin-dependent halogenase involved in the biosynthesis of melleolides, a range of antifungal and phytotoxic polyketide derivatives composed of an orsellinic acid (OA) moiety esterified to various sesquiterpene alcohols. The halogenase catalyzes the transfer of a single chlorine atom to the melleolide backbone, resulting in a 6'-chloromelleolide product. The enzyme acts on free substrate and does not depend on carrier-protein-dependent acceptor molecules. The protein is Flavin-dependent halogenase armH3 of Armillaria mellea (Honey mushroom).